The chain runs to 102 residues: Large ribosomal subunit protein uL24 (102 aa).

The protein belongs to the universal ribosomal protein uL24 family. Part of the 50S ribosomal subunit.

Functionally, one of two assembly initiator proteins, it binds directly to the 5'-end of the 23S rRNA, where it nucleates assembly of the 50S subunit. One of the proteins that surrounds the polypeptide exit tunnel on the outside of the subunit. The polypeptide is Large ribosomal subunit protein uL24 (Lysinibacillus sphaericus (strain C3-41)).